The sequence spans 274 residues: Large ribosomal subunit protein uL2 (274 aa).

The segment at 224–256 (AMNPIDHPHGGGEGRTGEGRHAVDPWGNLTKGY) is disordered. The span at 229–246 (DHPHGGGEGRTGEGRHAV) shows a compositional bias: basic and acidic residues.

This sequence belongs to the universal ribosomal protein uL2 family. As to quaternary structure, part of the 50S ribosomal subunit. Forms a bridge to the 30S subunit in the 70S ribosome.

In terms of biological role, one of the primary rRNA binding proteins. Required for association of the 30S and 50S subunits to form the 70S ribosome, for tRNA binding and peptide bond formation. It has been suggested to have peptidyltransferase activity; this is somewhat controversial. Makes several contacts with the 16S rRNA in the 70S ribosome. This Acidovorax sp. (strain JS42) protein is Large ribosomal subunit protein uL2.